The sequence spans 88 residues: Bombyxin B-8 (88 aa).

An N-terminal signal peptide occupies residues 1–18; sequence MKTSVIFVLIVLNLMWSG. Cystine bridges form between C28–C74, C40–C87, and C73–C78. Positions 47-65 are cleaved as a propeptide — c peptide like; that stretch reads GGAQYAPYFWQKAYLGSRG.

This sequence belongs to the insulin family. Heterodimer of a B chain and an A chain linked by two disulfide bonds.

The protein localises to the secreted. Functionally, brain peptide responsible for activation of prothoracic glands to produce ecdysone in insects. In Bombyx mori (Silk moth), this protein is Bombyxin B-8 (BBXB8).